A 345-amino-acid polypeptide reads, in one-letter code: Gibberellin receptor GID1A (345 aa).

An N-acetylalanine modification is found at Ala2. The Involved in the stabilization of the negatively charged intermediate by the formation of the oxyanion hole signature appears at 113–115; that stretch reads HGG. Gibberellin A4 is bound by residues 115-116, Tyr127, and Ser191; that span reads GS. Positions 116, 127, 191, and 238 each coordinate gibberellin A3. Ser191 is an active-site residue. Asp289 is an active-site residue. Gly320 serves as a coordination point for gibberellin A4. Residue Gly320 participates in gibberellin A3 binding.

Belongs to the 'GDXG' lipolytic enzyme family. Interacts (via N-terminus) with the DELLA proteins GAI, RGA, RGL1, RGL2 and RGL3 (via N-terminus) in a GA-dependent manner. As to expression, widely expressed.

It localises to the nucleus. Its function is as follows. Functions as a soluble gibberellin (GA) receptor. GA is an essential hormone that regulates growth and development in plants. Binds with high affinity the biologically active gibberellin GA4, but has no affinity for the biologically inactive GAs. In response to GA, interacts with specific DELLA proteins, known as repressors of GA-induced growth, and targets them for degradation via proteasome. Seems to be required for GA signaling that controls root growth, seed germination, stem elongation and flower development. Partially redundant with GID1B and GID1C. The polypeptide is Gibberellin receptor GID1A (GID1A) (Arabidopsis thaliana (Mouse-ear cress)).